We begin with the raw amino-acid sequence, 336 residues long: Dihydroorotate dehydrogenase (quinone) (336 aa).

Residues 62 to 66 and threonine 86 contribute to the FMN site; that span reads AGLDK. Lysine 66 is a substrate binding site. Substrate is bound at residue 111–115; the sequence is NRMGF. FMN is bound by residues asparagine 139 and asparagine 172. Residue asparagine 172 participates in substrate binding. The Nucleophile role is filled by serine 175. Asparagine 177 contributes to the substrate binding site. Residues lysine 217 and threonine 245 each coordinate FMN. 246-247 serves as a coordination point for substrate; that stretch reads NT. FMN contacts are provided by residues glycine 268, glycine 297, and 318–319; that span reads YS.

The protein belongs to the dihydroorotate dehydrogenase family. Type 2 subfamily. As to quaternary structure, monomer. It depends on FMN as a cofactor.

The protein resides in the cell membrane. The catalysed reaction is (S)-dihydroorotate + a quinone = orotate + a quinol. It functions in the pathway pyrimidine metabolism; UMP biosynthesis via de novo pathway; orotate from (S)-dihydroorotate (quinone route): step 1/1. Functionally, catalyzes the conversion of dihydroorotate to orotate with quinone as electron acceptor. This is Dihydroorotate dehydrogenase (quinone) from Psychromonas ingrahamii (strain DSM 17664 / CCUG 51855 / 37).